Consider the following 197-residue polypeptide: Peptidyl-tRNA hydrolase (197 aa).

Tyrosine 17 is a tRNA binding site. Histidine 22 acts as the Proton acceptor in catalysis. Positions 68, 70, and 116 each coordinate tRNA.

Belongs to the PTH family. In terms of assembly, monomer.

The protein resides in the cytoplasm. It carries out the reaction an N-acyl-L-alpha-aminoacyl-tRNA + H2O = an N-acyl-L-amino acid + a tRNA + H(+). Hydrolyzes ribosome-free peptidyl-tRNAs (with 1 or more amino acids incorporated), which drop off the ribosome during protein synthesis, or as a result of ribosome stalling. Functionally, catalyzes the release of premature peptidyl moieties from peptidyl-tRNA molecules trapped in stalled 50S ribosomal subunits, and thus maintains levels of free tRNAs and 50S ribosomes. This chain is Peptidyl-tRNA hydrolase, found in Yersinia enterocolitica serotype O:8 / biotype 1B (strain NCTC 13174 / 8081).